The sequence spans 657 residues: Tetracycline resistance protein TetQ (657 aa).

Positions 17–260 constitute a tr-type G domain; the sequence is MNIINLGILA…AISSFILPPE (244 aa). GTP-binding positions include 26-33, 90-94, and 144-147; these read AHIDAGKT, DTPGH, and NKID.

Belongs to the TRAFAC class translation factor GTPase superfamily. Classic translation factor GTPase family. TetM/TetO subfamily.

Its function is as follows. Abolishes the inhibitory effect of tetracycline on protein synthesis by non-covalently modifying ribosomes. Confers mild resistance to tetracycline when expressed in E.coli. The protein is Tetracycline resistance protein TetQ (tetQ) of Bacteroides fragilis.